The primary structure comprises 121 residues: Small ribosomal subunit protein bS16 (121 aa).

A compositionally biased stretch (basic and acidic residues) spans R85 to K110. Residues R85–E121 are disordered. Residues A111–E121 are compositionally biased toward low complexity.

Belongs to the bacterial ribosomal protein bS16 family.

The chain is Small ribosomal subunit protein bS16 from Azorhizobium caulinodans (strain ATCC 43989 / DSM 5975 / JCM 20966 / LMG 6465 / NBRC 14845 / NCIMB 13405 / ORS 571).